We begin with the raw amino-acid sequence, 189 residues long: Peptide deformylase (189 aa).

The Fe cation site is built by C116 and H159. Residue E160 is part of the active site. H163 serves as a coordination point for Fe cation.

This sequence belongs to the polypeptide deformylase family. Requires Fe(2+) as cofactor.

The enzyme catalyses N-terminal N-formyl-L-methionyl-[peptide] + H2O = N-terminal L-methionyl-[peptide] + formate. Removes the formyl group from the N-terminal Met of newly synthesized proteins. Requires at least a dipeptide for an efficient rate of reaction. N-terminal L-methionine is a prerequisite for activity but the enzyme has broad specificity at other positions. The protein is Peptide deformylase of Limosilactobacillus fermentum (strain NBRC 3956 / LMG 18251) (Lactobacillus fermentum).